We begin with the raw amino-acid sequence, 475 residues long: Bifunctional protein HldE (475 aa).

The interval 1–318 is ribokinase; sequence MKITLPEFEK…ANALYTEQET (318 aa). 195-198 contributes to the ATP binding site; it reads NMSE. D264 is a catalytic residue. The segment at 344 to 475 is cytidylyltransferase; the sequence is MTNGCFDILH…DIIKTIRERG (132 aa).

The protein in the N-terminal section; belongs to the carbohydrate kinase PfkB family. It in the C-terminal section; belongs to the cytidylyltransferase family. Homodimer.

It carries out the reaction D-glycero-beta-D-manno-heptose 7-phosphate + ATP = D-glycero-beta-D-manno-heptose 1,7-bisphosphate + ADP + H(+). It catalyses the reaction D-glycero-beta-D-manno-heptose 1-phosphate + ATP + H(+) = ADP-D-glycero-beta-D-manno-heptose + diphosphate. It participates in nucleotide-sugar biosynthesis; ADP-L-glycero-beta-D-manno-heptose biosynthesis; ADP-L-glycero-beta-D-manno-heptose from D-glycero-beta-D-manno-heptose 7-phosphate: step 1/4. Its pathway is nucleotide-sugar biosynthesis; ADP-L-glycero-beta-D-manno-heptose biosynthesis; ADP-L-glycero-beta-D-manno-heptose from D-glycero-beta-D-manno-heptose 7-phosphate: step 3/4. Functionally, catalyzes the phosphorylation of D-glycero-D-manno-heptose 7-phosphate at the C-1 position to selectively form D-glycero-beta-D-manno-heptose-1,7-bisphosphate. Catalyzes the ADP transfer from ATP to D-glycero-beta-D-manno-heptose 1-phosphate, yielding ADP-D-glycero-beta-D-manno-heptose. The sequence is that of Bifunctional protein HldE from Aeromonas hydrophila subsp. hydrophila (strain ATCC 7966 / DSM 30187 / BCRC 13018 / CCUG 14551 / JCM 1027 / KCTC 2358 / NCIMB 9240 / NCTC 8049).